Here is a 278-residue protein sequence, read N- to C-terminus: HTH-type transcriptional regulator ExsA (278 aa).

The 99-residue stretch at 171–269 (ERLQLFMEKH…GCTPSRSRQG (99 aa)) folds into the HTH araC/xylS-type domain. 2 DNA-binding regions (H-T-H motif) span residues 188–209 (SDFS…GSVY) and 236–259 (IVDI…RRRF).

Homodimer. Interacts with ExsD; this interaction inhibits ExsA activity.

In the absence of inducing signals such as low Ca(2+) or host cell contact, the T3SS/injectisome is expressed at a low basal level and exists in a quiescent state due to ExsA sequestration by ExsD in a 1:1 complex. Upon host cell contact, this interaction is disrupted by the anti-antiactivator protein ExsC leading to ExsA activation. In terms of biological role, transcriptional regulator that plays an essential role in the activation the type III secretion system (T3SS) operons. In addition, ExsA directly regulates the transcription of ImpA virulence factor that cooperatively inhibits the functions of host macrophages together with the T3SS. In Pseudomonas aeruginosa (strain ATCC 15692 / DSM 22644 / CIP 104116 / JCM 14847 / LMG 12228 / 1C / PRS 101 / PAO1), this protein is HTH-type transcriptional regulator ExsA (exsA).